The chain runs to 343 residues: S-adenosylmethionine:tRNA ribosyltransferase-isomerase (343 aa).

This sequence belongs to the QueA family. Monomer.

The protein resides in the cytoplasm. It catalyses the reaction 7-aminomethyl-7-carbaguanosine(34) in tRNA + S-adenosyl-L-methionine = epoxyqueuosine(34) in tRNA + adenine + L-methionine + 2 H(+). The protein operates within tRNA modification; tRNA-queuosine biosynthesis. Transfers and isomerizes the ribose moiety from AdoMet to the 7-aminomethyl group of 7-deazaguanine (preQ1-tRNA) to give epoxyqueuosine (oQ-tRNA). The polypeptide is S-adenosylmethionine:tRNA ribosyltransferase-isomerase (Coxiella burnetii (strain CbuG_Q212) (Coxiella burnetii (strain Q212))).